The primary structure comprises 352 residues: Rhodopsin (352 aa).

Residues 1–36 (MNGTEGPYFYVPMSNATGVVRSPYEYPQYYLAPPWA) are Extracellular-facing. 2 N-linked (GlcNAc...) asparagine glycosylation sites follow: Asn-2 and Asn-15. Residues 37–61 (YACLAAYMFFLILVGFPVNFLTLYV) traverse the membrane as a helical segment. The Cytoplasmic portion of the chain corresponds to 62–73 (TIEHKKLRTPLN). The chain crosses the membrane as a helical span at residues 74-96 (YILLNLAVADLFMVFGGFTTTMY). The Extracellular portion of the chain corresponds to 97 to 110 (TSLNGYFVFGRLGC). Cys-110 and Cys-187 are joined by a disulfide. A helical membrane pass occupies residues 111–133 (NLEGFFATFGGINSLWCLVVLSI). The 'Ionic lock' involved in activated form stabilization signature appears at 134–136 (ERW). Topologically, residues 134–152 (ERWVVVCKPMSNFRFGENH) are cytoplasmic. Residues 153-173 (AIMGVAFTWFMALACTVPPLV) form a helical membrane-spanning segment. The Extracellular segment spans residues 174–202 (GWSRYIPEGMQCSCGIDYYTRAEGFNNES). The helical transmembrane segment at 203–224 (FVIYMFVVHFLTPLFVITFCYG) threads the bilayer. The Cytoplasmic segment spans residues 225 to 252 (RLVCTVKEAAAQQQESETTQRAEREVTR). The chain crosses the membrane as a helical span at residues 253 to 274 (MVILMFIAYLVCWLPYASVSWW). The Extracellular portion of the chain corresponds to 275–286 (IFTNQGSEFGPI). The helical transmembrane segment at 287–308 (FMTVPAFFAKSSSIYNPVIYIC) threads the bilayer. At Lys-296 the chain carries N6-(retinylidene)lysine. Residues 309-352 (LNKQFRHCMITTLCCGKNPFEEEEGASTTASKTEASSVSSVSPA) are Cytoplasmic-facing. 2 S-palmitoyl cysteine lipidation sites follow: Cys-322 and Cys-323. A disordered region spans residues 331–352 (EEGASTTASKTEASSVSSVSPA). The segment covering 334–352 (ASTTASKTEASSVSSVSPA) has biased composition (low complexity).

This sequence belongs to the G-protein coupled receptor 1 family. Opsin subfamily. Post-translationally, phosphorylated on some or all of the serine and threonine residues present in the C-terminal region. In terms of processing, contains one covalently linked retinal chromophore.

It is found in the membrane. The protein resides in the cell projection. The protein localises to the cilium. It localises to the photoreceptor outer segment. Functionally, photoreceptor required for image-forming vision at low light intensity. While most salt water fish species use retinal as chromophore, most freshwater fish use 3-dehydroretinal, or a mixture of retinal and 3-dehydroretinal. Light-induced isomerization of 11-cis to all-trans retinal triggers a conformational change that activates signaling via G-proteins. Subsequent receptor phosphorylation mediates displacement of the bound G-protein alpha subunit by arrestin and terminates signaling. This Psalidodon fasciatus (Banded astyanax) protein is Rhodopsin (rho).